Consider the following 327-residue polypeptide: MASSVPGPIDLPESRYDLSTYWGRIRHCAEISDPTMLLTTEKDLAHAREIISAYRHGELKETTPEFWRAKKQLDSTVHPDTGKTVLLPFRMSSNVLSNLVVTVGMLTPGLGTAGTVFWQWANQSLNVAVNSANANKSHPMSTSQLLTNYAAAVTASCGVALGLNNLVPRLKNISPHSKLILGRLVPFAAVVSAGIVNVFLMRGNEIRKGISVFDSNGDEVGKSKKAAFMAVGETALSRVINATPTMVIPPLILVRLQRGVLKGKSLGVQTLANLGLISVTMFSALPFALGIFPQRQAIHLNKLEPELHGKKDKDGKPIEKVYFNRGI.

Residue alanine 2 is modified to N-acetylalanine. Helical transmembrane passes span 98–118, 143–163, 179–199, and 272–292; these read NLVV…TVFW, SQLL…ALGL, LILG…VNVF, and ANLG…LGIF.

Belongs to the sideroflexin family.

Its subcellular location is the mitochondrion membrane. Mitochondrial amino-acid transporter that mediates transport of serine into mitochondria. The polypeptide is Sideroflexin FSF1 (Saccharomyces cerevisiae (strain ATCC 204508 / S288c) (Baker's yeast)).